Consider the following 254-residue polypeptide: Probable WRKY transcription factor 67 (254 aa).

The segment at residues 102-170 is a DNA-binding region (WRKY); sequence SRTMCPNDGF…YLGKHVCKAF (69 aa).

It belongs to the WRKY group III family.

It is found in the nucleus. Functionally, transcription factor. Interacts specifically with the W box (5'-(T)TGAC[CT]-3'), a frequently occurring elicitor-responsive cis-acting element. This is Probable WRKY transcription factor 67 (WRKY67) from Arabidopsis thaliana (Mouse-ear cress).